The sequence spans 235 residues: Phosphoribosylaminoimidazole-succinocarboxamide synthase (235 aa).

This sequence belongs to the SAICAR synthetase family.

It carries out the reaction 5-amino-1-(5-phospho-D-ribosyl)imidazole-4-carboxylate + L-aspartate + ATP = (2S)-2-[5-amino-1-(5-phospho-beta-D-ribosyl)imidazole-4-carboxamido]succinate + ADP + phosphate + 2 H(+). It participates in purine metabolism; IMP biosynthesis via de novo pathway; 5-amino-1-(5-phospho-D-ribosyl)imidazole-4-carboxamide from 5-amino-1-(5-phospho-D-ribosyl)imidazole-4-carboxylate: step 1/2. This is Phosphoribosylaminoimidazole-succinocarboxamide synthase from Chloroherpeton thalassium (strain ATCC 35110 / GB-78).